A 416-amino-acid chain; its full sequence is 3-phosphoshikimate 1-carboxyvinyltransferase (416 aa).

The 3-phosphoshikimate site is built by Lys20, Ser21, and Arg25. Lys20 is a binding site for phosphoenolpyruvate. Residues Gly88 and Arg116 each coordinate phosphoenolpyruvate. 3-phosphoshikimate contacts are provided by Ser159, Ser160, Gln161, Ser186, Asp300, and Lys327. Residue Gln161 coordinates phosphoenolpyruvate. The active-site Proton acceptor is Asp300. Positions 331 and 373 each coordinate phosphoenolpyruvate.

The protein belongs to the EPSP synthase family. Monomer.

It is found in the cytoplasm. The catalysed reaction is 3-phosphoshikimate + phosphoenolpyruvate = 5-O-(1-carboxyvinyl)-3-phosphoshikimate + phosphate. It functions in the pathway metabolic intermediate biosynthesis; chorismate biosynthesis. In terms of biological role, catalyzes the transfer of the enolpyruvyl moiety of phosphoenolpyruvate (PEP) to the 5-hydroxyl of shikimate-3-phosphate (S3P) to produce enolpyruvyl shikimate-3-phosphate and inorganic phosphate. This Archaeoglobus fulgidus (strain ATCC 49558 / DSM 4304 / JCM 9628 / NBRC 100126 / VC-16) protein is 3-phosphoshikimate 1-carboxyvinyltransferase.